Reading from the N-terminus, the 257-residue chain is Thiazole synthase (257 aa).

Lysine 96 (schiff-base intermediate with DXP) is an active-site residue. 1-deoxy-D-xylulose 5-phosphate is bound by residues glycine 157, 184-185 (AG), and 206-207 (NT).

This sequence belongs to the ThiG family. As to quaternary structure, homotetramer. Forms heterodimers with either ThiH or ThiS.

It localises to the cytoplasm. The enzyme catalyses [ThiS sulfur-carrier protein]-C-terminal-Gly-aminoethanethioate + 2-iminoacetate + 1-deoxy-D-xylulose 5-phosphate = [ThiS sulfur-carrier protein]-C-terminal Gly-Gly + 2-[(2R,5Z)-2-carboxy-4-methylthiazol-5(2H)-ylidene]ethyl phosphate + 2 H2O + H(+). It participates in cofactor biosynthesis; thiamine diphosphate biosynthesis. Its function is as follows. Catalyzes the rearrangement of 1-deoxy-D-xylulose 5-phosphate (DXP) to produce the thiazole phosphate moiety of thiamine. Sulfur is provided by the thiocarboxylate moiety of the carrier protein ThiS. In vitro, sulfur can be provided by H(2)S. The sequence is that of Thiazole synthase from Bartonella henselae (strain ATCC 49882 / DSM 28221 / CCUG 30454 / Houston 1) (Rochalimaea henselae).